The primary structure comprises 78 residues: Chondrosarcoma-associated gene 1 protein (78 aa).

Positions 1–19 are cleaved as a signal peptide; it reads MSATTACWPAFTVLGEARG. Residues 35 to 78 are disordered; the sequence is KMSRKPRASSPFSNNHPSTPKRFPRQPRREKGPVKEVPGTKGSP.

Expressed in chondrosarcoma, melanoma, cartilage and testis, but not in other normal tissues.

It localises to the cytoplasm. Its subcellular location is the cytoskeleton. The protein localises to the microtubule organizing center. It is found in the centrosome. The protein resides in the spindle pole. Functionally, may play an important role in maintaining centrosome integrity during mitosis. This Homo sapiens (Human) protein is Chondrosarcoma-associated gene 1 protein.